The chain runs to 284 residues: 4-hydroxybenzoate octaprenyltransferase (284 aa).

The next 9 membrane-spanning stretches (helical) occupy residues Ile-19–Met-39, Phe-42–Ile-62, Ile-93–Leu-113, Thr-114–Phe-134, His-136–Ala-156, Leu-161–Thr-181, Leu-209–Tyr-229, Phe-235–Leu-252, and Ala-264–Trp-284.

This sequence belongs to the UbiA prenyltransferase family. Requires Mg(2+) as cofactor.

It is found in the cell inner membrane. It carries out the reaction all-trans-octaprenyl diphosphate + 4-hydroxybenzoate = 4-hydroxy-3-(all-trans-octaprenyl)benzoate + diphosphate. The protein operates within cofactor biosynthesis; ubiquinone biosynthesis. In terms of biological role, catalyzes the prenylation of para-hydroxybenzoate (PHB) with an all-trans polyprenyl group. Mediates the second step in the final reaction sequence of ubiquinone-8 (UQ-8) biosynthesis, which is the condensation of the polyisoprenoid side chain with PHB, generating the first membrane-bound Q intermediate 3-octaprenyl-4-hydroxybenzoate. This chain is 4-hydroxybenzoate octaprenyltransferase, found in Vibrio atlanticus (strain LGP32) (Vibrio splendidus (strain Mel32)).